A 1295-amino-acid polypeptide reads, in one-letter code: Phosphoribosylformylglycinamidine synthase (1295 aa).

ATP contacts are provided by residues 305–316, 384–386, and Ala-676; these read GAATGSGGEIRD and TGY. Positions 677, 716, 720, and 884 each coordinate Mg(2+). Ser-886 is an ATP binding site. A Glutamine amidotransferase type-1 domain is found at 1042–1295; it reads VAILREQGVN…MFRNARKHLG (254 aa). The active-site Nucleophile is the Cys-1135. Catalysis depends on residues His-1260 and Glu-1262.

It in the N-terminal section; belongs to the FGAMS family. As to quaternary structure, monomer.

It localises to the cytoplasm. It catalyses the reaction N(2)-formyl-N(1)-(5-phospho-beta-D-ribosyl)glycinamide + L-glutamine + ATP + H2O = 2-formamido-N(1)-(5-O-phospho-beta-D-ribosyl)acetamidine + L-glutamate + ADP + phosphate + H(+). It functions in the pathway purine metabolism; IMP biosynthesis via de novo pathway; 5-amino-1-(5-phospho-D-ribosyl)imidazole from N(2)-formyl-N(1)-(5-phospho-D-ribosyl)glycinamide: step 1/2. Functionally, phosphoribosylformylglycinamidine synthase involved in the purines biosynthetic pathway. Catalyzes the ATP-dependent conversion of formylglycinamide ribonucleotide (FGAR) and glutamine to yield formylglycinamidine ribonucleotide (FGAM) and glutamate. The chain is Phosphoribosylformylglycinamidine synthase from Idiomarina loihiensis (strain ATCC BAA-735 / DSM 15497 / L2-TR).